Reading from the N-terminus, the 823-residue chain is DNA ligase (823 aa).

Residues 32-36, 81-82, and Glu121 contribute to the NAD(+) site; these read DAEYD and SL. The active-site N6-AMP-lysine intermediate is the Lys123. NAD(+) contacts are provided by Arg144, Glu181, Lys299, and Lys323. Cys449, Cys452, Cys467, and Cys473 together coordinate Zn(2+). A disordered region spans residues 528 to 558; sequence ETADKGSSENENGDAETVSGDLSKYNTQNGK. The region spanning 746 to 823 is the BRCT domain; that stretch reads GINKAVAGKT…SEAELLTLLC (78 aa).

The protein belongs to the NAD-dependent DNA ligase family. LigA subfamily. Mg(2+) serves as cofactor. It depends on Mn(2+) as a cofactor.

It carries out the reaction NAD(+) + (deoxyribonucleotide)n-3'-hydroxyl + 5'-phospho-(deoxyribonucleotide)m = (deoxyribonucleotide)n+m + AMP + beta-nicotinamide D-nucleotide.. Its function is as follows. DNA ligase that catalyzes the formation of phosphodiester linkages between 5'-phosphoryl and 3'-hydroxyl groups in double-stranded DNA using NAD as a coenzyme and as the energy source for the reaction. It is essential for DNA replication and repair of damaged DNA. The chain is DNA ligase from Neisseria gonorrhoeae (strain NCCP11945).